The sequence spans 150 residues: Large ribosomal subunit protein bL9 (150 aa).

It belongs to the bacterial ribosomal protein bL9 family.

Binds to the 23S rRNA. This chain is Large ribosomal subunit protein bL9, found in Arthrobacter sp. (strain FB24).